The chain runs to 306 residues: UDP-N-acetylenolpyruvoylglucosamine reductase (306 aa).

Residues 34 to 198 form the FAD-binding PCMH-type domain; it reads VGGPADLLIT…LEVTFKLHNS (165 aa). The active site involves Arg177. Residue Ser227 is the Proton donor of the active site. Glu297 is an active-site residue.

It belongs to the MurB family. The cofactor is FAD.

It is found in the cytoplasm. It carries out the reaction UDP-N-acetyl-alpha-D-muramate + NADP(+) = UDP-N-acetyl-3-O-(1-carboxyvinyl)-alpha-D-glucosamine + NADPH + H(+). Its pathway is cell wall biogenesis; peptidoglycan biosynthesis. In terms of biological role, cell wall formation. This is UDP-N-acetylenolpyruvoylglucosamine reductase from Clostridium botulinum (strain Okra / Type B1).